The following is a 147-amino-acid chain: Fluoride-specific ion channel FluC 1 (147 aa).

Transmembrane regions (helical) follow at residues 29–49 (YVYIFIGGALGALLRYLISFL), 61–81 (IANLTGAFVMGLLTALTIAFF), 90–110 (AITTGFLGALTTFSTFQLELI), and 118–138 (FITLLLYAVTSYVFGILLCYV). Gly-97 and Thr-100 together coordinate Na(+).

Belongs to the fluoride channel Fluc/FEX (TC 1.A.43) family.

It is found in the cell membrane. The enzyme catalyses fluoride(in) = fluoride(out). With respect to regulation, na(+) is not transported, but it plays an essential structural role and its presence is essential for fluoride channel function. Fluoride-specific ion channel. Important for reducing fluoride concentration in the cell, thus reducing its toxicity. The polypeptide is Fluoride-specific ion channel FluC 1 (Staphylococcus aureus (strain Mu50 / ATCC 700699)).